Reading from the N-terminus, the 304-residue chain is Ornithine carbamoyltransferase (304 aa).

Residues 47-50 (STRT), Arg-98, and 125-128 (HPCQ) each bind carbamoyl phosphate. Residues Asn-156, Asp-221, and 225–226 (SM) contribute to the L-ornithine site. Residues 262–263 (CL) and Arg-290 each bind carbamoyl phosphate.

Belongs to the aspartate/ornithine carbamoyltransferase superfamily. OTCase family.

The protein resides in the cytoplasm. The enzyme catalyses carbamoyl phosphate + L-ornithine = L-citrulline + phosphate + H(+). It participates in amino-acid biosynthesis; L-arginine biosynthesis; L-arginine from L-ornithine and carbamoyl phosphate: step 1/3. Functionally, reversibly catalyzes the transfer of the carbamoyl group from carbamoyl phosphate (CP) to the N(epsilon) atom of ornithine (ORN) to produce L-citrulline. The polypeptide is Ornithine carbamoyltransferase (Methanococcus aeolicus (strain ATCC BAA-1280 / DSM 17508 / OCM 812 / Nankai-3)).